Here is a 297-residue protein sequence, read N- to C-terminus: Diaminopimelate epimerase (297 aa).

Positions 13, 46, and 66 each coordinate substrate. The active-site Proton donor is cysteine 76. Residues 77-78 (GN), asparagine 174, asparagine 207, and 225-226 (ER) contribute to the substrate site. Cysteine 234 functions as the Proton acceptor in the catalytic mechanism. 235-236 (GT) serves as a coordination point for substrate.

Belongs to the diaminopimelate epimerase family. As to quaternary structure, homodimer.

Its subcellular location is the cytoplasm. The enzyme catalyses (2S,6S)-2,6-diaminopimelate = meso-2,6-diaminopimelate. The protein operates within amino-acid biosynthesis; L-lysine biosynthesis via DAP pathway; DL-2,6-diaminopimelate from LL-2,6-diaminopimelate: step 1/1. Catalyzes the stereoinversion of LL-2,6-diaminopimelate (L,L-DAP) to meso-diaminopimelate (meso-DAP), a precursor of L-lysine and an essential component of the bacterial peptidoglycan. The sequence is that of Diaminopimelate epimerase from Leptothrix cholodnii (strain ATCC 51168 / LMG 8142 / SP-6) (Leptothrix discophora (strain SP-6)).